Here is a 390-residue protein sequence, read N- to C-terminus: Probable protein phosphatase 2C 30 (390 aa).

Over residues 1–10 (MQLSKNPIKQ) the composition is skewed to polar residues. 2 disordered regions span residues 1–20 (MQLSKNPIKQTRNREKNYTD) and 40–85 (PPLV…DSET). Residues 44–61 (FSPTSVKTPLSSPRSSPP) show a composition bias toward low complexity. In terms of domain architecture, PPM-type phosphatase spans 128–385 (YYSVYCKRGR…DDISLIIIQL (258 aa)). Residues Asp166, Gly167, Asp331, and Asp376 each contribute to the Mn(2+) site.

It belongs to the PP2C family. Requires Mg(2+) as cofactor. Mn(2+) serves as cofactor.

The catalysed reaction is O-phospho-L-seryl-[protein] + H2O = L-seryl-[protein] + phosphate. It carries out the reaction O-phospho-L-threonyl-[protein] + H2O = L-threonyl-[protein] + phosphate. This chain is Probable protein phosphatase 2C 30 (PP2C5), found in Arabidopsis thaliana (Mouse-ear cress).